We begin with the raw amino-acid sequence, 1455 residues long: Fanconi anemia group A protein (1455 aa).

The Nuclear localization signal motif lies at 18–34 (RRRAWAELLAGRVKREK). S1449 carries the phosphoserine modification.

Belongs to the multisubunit FA complex composed of FANCA, FANCB, FANCC, FANCE, FANCF, FANCG, FANCL/PHF9 and FANCM. The complex is not found in FA patients. In complex with FANCF, FANCG and FANCL, but not with FANCC, nor FANCE, interacts with HES1; this interaction may be essential for the stability and nuclear localization of FA core complex proteins. The complex with FANCC and FANCG may also include EIF2AK2 and HSP70. Interacts with FAAP20/C1orf86; interaction is direct. In terms of processing, phosphorylation is required for the formation of the nuclear complex. Not phosphorylated in cells derived from groups A, B, C, E, F, G, and H.

The protein resides in the nucleus. It is found in the cytoplasm. Functionally, DNA repair protein that may operate in a postreplication repair or a cell cycle checkpoint function. May be involved in interstrand DNA cross-link repair and in the maintenance of normal chromosome stability. The polypeptide is Fanconi anemia group A protein (FANCA) (Homo sapiens (Human)).